The following is a 530-amino-acid chain: MASNYDKLTSSRVAIIGAGVSGLAAAKNLVHHNPTVFEASDSVGGVWRSCTYETTKLQSARVDYEFSDFPWPNNRDDTTFPPYLEILDYLESYAKHFDLLKFMKFGSKVIEVRFIGDGETPQMVDLGAYGNLLPGKPVWEVAVQIGDSGDIQWHAFEFVVVCTGKYGDVPRIPAFPAKKGPEMFQGKVMHSMDYCKLEKEEASTLLSGKKVAVIGFKKSAIDLALESALANQGEGGKACTMVVRTTHWGIPHYWVWGLPFFLFYSSRASQFLHDRPNQSFLRTLFCLLFSLLRAVVSKFIESYVLWKLPLEKYGLKPNHSFEEDYASCQMAIIPENFFEEADKGMIRFKKSSKWWFYEEGIVFEDGTTLEADVVILATGYDGKKKLKAIVPEPFRTWLEFPSGVMPLYRGTIHPLIPNMGFVGYVQSSSNLHTSELRSMWLSRLVDEKFRLPSKEKMLDQFLKEMEVTRNSSRFYKRHCISTFSIQHADDMCNDMGLNPWRKSNFLLEAFSPYGSQDYRLGQEEKEDMTA.

Residues 17 to 21, glutamate 38, 46 to 47, and 58 to 59 contribute to the FAD site; these read GAGVS, VW, and QS. 219–222 is an NADP(+) binding site; sequence SAID.

The protein belongs to the FMO family. FAD serves as cofactor.

In terms of biological role, required for the establishment of systemic acquired resistance (SAR). Not involved in local defense mechanisms. Confers a salicylic acid-dependent (SA) resistance to virulent pathogens such as P.syringae pv tomato and H.parasitica. In Arabidopsis thaliana (Mouse-ear cress), this protein is Probable flavin-containing monooxygenase 1 (FMO1).